We begin with the raw amino-acid sequence, 208 residues long: Putative ankyrin repeat protein Ta0196 (208 aa).

ANK repeat units lie at residues 49–78 (YQRN…HIDD), 82–111 (EGNT…SIDI), 115–144 (AGNT…NINI), and 148–177 (EGDT…DLNA).

This chain is Putative ankyrin repeat protein Ta0196, found in Thermoplasma acidophilum (strain ATCC 25905 / DSM 1728 / JCM 9062 / NBRC 15155 / AMRC-C165).